We begin with the raw amino-acid sequence, 352 residues long: Phosphoribosylformylglycinamidine cyclo-ligase (352 aa).

The protein belongs to the AIR synthase family.

It is found in the cytoplasm. The enzyme catalyses 2-formamido-N(1)-(5-O-phospho-beta-D-ribosyl)acetamidine + ATP = 5-amino-1-(5-phospho-beta-D-ribosyl)imidazole + ADP + phosphate + H(+). It functions in the pathway purine metabolism; IMP biosynthesis via de novo pathway; 5-amino-1-(5-phospho-D-ribosyl)imidazole from N(2)-formyl-N(1)-(5-phospho-D-ribosyl)glycinamide: step 2/2. The protein is Phosphoribosylformylglycinamidine cyclo-ligase of Coxiella burnetii (strain RSA 331 / Henzerling II).